A 156-amino-acid chain; its full sequence is Ribosome maturation factor RimP (156 aa).

It belongs to the RimP family.

Its subcellular location is the cytoplasm. Its function is as follows. Required for maturation of 30S ribosomal subunits. This Bacillus cereus (strain B4264) protein is Ribosome maturation factor RimP.